Reading from the N-terminus, the 206-residue chain is Large ribosomal subunit protein eL8 (206 aa).

The protein belongs to the eukaryotic ribosomal protein eL8 family. As to quaternary structure, component of the large ribosomal subunit.

It localises to the cytoplasm. The protein is Large ribosomal subunit protein eL8 (RPL7A) of Encephalitozoon cuniculi (strain GB-M1) (Microsporidian parasite).